A 269-amino-acid polypeptide reads, in one-letter code: 5'-nucleotidase SurE (269 aa).

A divalent metal cation-binding residues include aspartate 11, aspartate 12, serine 43, and asparagine 101.

The protein belongs to the SurE nucleotidase family. A divalent metal cation serves as cofactor.

It is found in the cytoplasm. The catalysed reaction is a ribonucleoside 5'-phosphate + H2O = a ribonucleoside + phosphate. Nucleotidase that shows phosphatase activity on nucleoside 5'-monophosphates. The protein is 5'-nucleotidase SurE of Prochlorococcus marinus subsp. pastoris (strain CCMP1986 / NIES-2087 / MED4).